We begin with the raw amino-acid sequence, 134 residues long: DNA-directed RNA polymerase subunit omega (134 aa).

The protein belongs to the RNA polymerase subunit omega family. The RNAP catalytic core consists of 2 alpha, 1 beta, 1 beta' and 1 omega subunit. When a sigma factor is associated with the core the holoenzyme is formed, which can initiate transcription.

It catalyses the reaction RNA(n) + a ribonucleoside 5'-triphosphate = RNA(n+1) + diphosphate. Promotes RNA polymerase assembly. Latches the N- and C-terminal regions of the beta' subunit thereby facilitating its interaction with the beta and alpha subunits. The chain is DNA-directed RNA polymerase subunit omega from Rhizobium johnstonii (strain DSM 114642 / LMG 32736 / 3841) (Rhizobium leguminosarum bv. viciae).